The following is a 154-amino-acid chain: Xanthine-guanine phosphoribosyltransferase (154 aa).

Residues 37–38 (RG), Arg-69, and 88–96 (EDLVDSGDT) each bind 5-phospho-alpha-D-ribose 1-diphosphate. A GMP-binding site is contributed by Arg-69. Asp-89 is a binding site for Mg(2+). Residues Asp-92 and Ile-135 each coordinate guanine. Residues Asp-92 and Ile-135 each coordinate xanthine. GMP-binding positions include 92 to 96 (DSGDT) and 134 to 135 (WI).

The protein belongs to the purine/pyrimidine phosphoribosyltransferase family. XGPT subfamily. In terms of assembly, homotetramer. The cofactor is Mg(2+).

It is found in the cell inner membrane. It carries out the reaction GMP + diphosphate = guanine + 5-phospho-alpha-D-ribose 1-diphosphate. It catalyses the reaction XMP + diphosphate = xanthine + 5-phospho-alpha-D-ribose 1-diphosphate. The catalysed reaction is IMP + diphosphate = hypoxanthine + 5-phospho-alpha-D-ribose 1-diphosphate. It participates in purine metabolism; GMP biosynthesis via salvage pathway; GMP from guanine: step 1/1. The protein operates within purine metabolism; XMP biosynthesis via salvage pathway; XMP from xanthine: step 1/1. Its function is as follows. Purine salvage pathway enzyme that catalyzes the transfer of the ribosyl-5-phosphate group from 5-phospho-alpha-D-ribose 1-diphosphate (PRPP) to the N9 position of the 6-oxopurines guanine and xanthine to form the corresponding ribonucleotides GMP (guanosine 5'-monophosphate) and XMP (xanthosine 5'-monophosphate), with the release of PPi. To a lesser extent, also acts on hypoxanthine. This is Xanthine-guanine phosphoribosyltransferase from Vibrio parahaemolyticus serotype O3:K6 (strain RIMD 2210633).